A 291-amino-acid polypeptide reads, in one-letter code: MEMO1 family protein PYRAB05390 (291 aa).

This sequence belongs to the MEMO1 family.

The polypeptide is MEMO1 family protein PYRAB05390 (Pyrococcus abyssi (strain GE5 / Orsay)).